The following is an 878-amino-acid chain: Leucine--tRNA ligase (878 aa).

Residues 1–14 are compositionally biased toward low complexity; sequence MTASKSSSATASAS. The segment at 1–23 is disordered; the sequence is MTASKSSSATASASDRPDRYDPI. The 'HIGH' region signature appears at 58–68; sequence PYPSGSLHMGH. A 'KMSKS' region motif is present at residues 632 to 636; that stretch reads KMSKS. Lysine 635 contacts ATP.

It belongs to the class-I aminoacyl-tRNA synthetase family.

The protein resides in the cytoplasm. It carries out the reaction tRNA(Leu) + L-leucine + ATP = L-leucyl-tRNA(Leu) + AMP + diphosphate. This Synechococcus sp. (strain WH7803) protein is Leucine--tRNA ligase.